Consider the following 231-residue polypeptide: Flagellar L-ring protein (231 aa).

Residues 1–18 form the signal peptide; sequence MNRLMIVSLLGIATALGG. Cys-19 carries N-palmitoyl cysteine lipidation. The S-diacylglycerol cysteine moiety is linked to residue Cys-19. Residues 118 to 141 form a disordered region; the sequence is LSLSAEYGGSRDAKGDSQAGQSNS.

It belongs to the FlgH family. As to quaternary structure, the basal body constitutes a major portion of the flagellar organelle and consists of four rings (L,P,S, and M) mounted on a central rod.

It localises to the cell outer membrane. It is found in the bacterial flagellum basal body. In terms of biological role, assembles around the rod to form the L-ring and probably protects the motor/basal body from shearing forces during rotation. This Pseudomonas aeruginosa (strain LESB58) protein is Flagellar L-ring protein.